Consider the following 170-residue polypeptide: Myosin regulatory light chain 1 (170 aa).

A compositionally biased stretch (basic residues) spans 1–13 (MSKAAKKKSSKKR). The tract at residues 1–22 (MSKAAKKKSSKKRSGSEAAQFD) is disordered. EF-hand domains are found at residues 24–59 (KTIQ…MGQI) and 93–128 (DPEA…KRGE). Residues D37, N39, D41, and D48 each contribute to the Ca(2+) site.

Myosin is a hexamer of 2 heavy chains and 4 light chains (two regulatory light chains and two essential light chains).

This is Myosin regulatory light chain 1 (mlc-1) from Caenorhabditis elegans.